We begin with the raw amino-acid sequence, 160 residues long: Large ribosomal subunit protein bL17 (160 aa).

The segment at 128–160 (KKATKTRRSRKRKSADVVVEAAPAEETPKAAEE) is disordered. The span at 129 to 140 (KATKTRRSRKRK) shows a compositional bias: basic residues.

It belongs to the bacterial ribosomal protein bL17 family. As to quaternary structure, part of the 50S ribosomal subunit. Contacts protein L32.

In Porphyromonas gingivalis (strain ATCC 33277 / DSM 20709 / CIP 103683 / JCM 12257 / NCTC 11834 / 2561), this protein is Large ribosomal subunit protein bL17.